We begin with the raw amino-acid sequence, 218 residues long: Cell division protein SepF (218 aa).

The tract at residues 25-115 (DVAASTDNVI…IANRREQYQQ (91 aa)) is disordered. Over residues 29 to 43 (STDNVIPRSQQSVRA) the composition is skewed to polar residues. Over residues 47–63 (PKQEPRNNHVQQDHQAR) the composition is skewed to basic and acidic residues. Polar residues predominate over residues 102–115 (STSSIANRREQYQQ).

It belongs to the SepF family. Homodimer. Interacts with FtsZ.

Its subcellular location is the cytoplasm. In terms of biological role, cell division protein that is part of the divisome complex and is recruited early to the Z-ring. Probably stimulates Z-ring formation, perhaps through the cross-linking of FtsZ protofilaments. Its function overlaps with FtsA. The polypeptide is Cell division protein SepF (Streptococcus pyogenes serotype M5 (strain Manfredo)).